The following is a 329-amino-acid chain: Transposable element Tc3 transposase (329 aa).

A DNA-binding region spans residues 2–135; sequence PRGSALSDTE…LEFAKNNMGT (134 aa).

It belongs to the transposase 5 family. As to quaternary structure, homodimer or homotetramer.

It localises to the nucleus. In terms of biological role, binds specifically to the terminal nucleotides of the TC3 inverted repeat. Its expression results in frequent excision and transposition of endogenous TC3 elements. TC3 transposase acts by making double strand breaks at the ends of TC3 element. The excised element would then be inserted into a target sequence. The protein is Transposable element Tc3 transposase (tc3a) of Caenorhabditis elegans.